Consider the following 202-residue polypeptide: Ribosome maturation factor RimM (202 aa).

One can recognise a PRC barrel domain in the interval 100–195; sequence ADEWYPKDLI…YLTLDPPGGL (96 aa).

Belongs to the RimM family. Binds ribosomal protein uS19.

It is found in the cytoplasm. Its function is as follows. An accessory protein needed during the final step in the assembly of 30S ribosomal subunit, possibly for assembly of the head region. Essential for efficient processing of 16S rRNA. May be needed both before and after RbfA during the maturation of 16S rRNA. It has affinity for free ribosomal 30S subunits but not for 70S ribosomes. This is Ribosome maturation factor RimM from Bifidobacterium longum (strain NCC 2705).